Here is a 388-residue protein sequence, read N- to C-terminus: Chaperone protein DnaJ (388 aa).

Positions 5–69 (DYYDVLGVDK…QKRAQYDQFG (65 aa)) constitute a J domain. The CR-type zinc-finger motif lies at 145–227 (GKKTDITYTR…CHGQGTVDKK (83 aa)). Residues cysteine 158, cysteine 161, cysteine 175, cysteine 178, cysteine 201, cysteine 204, cysteine 215, and cysteine 218 each contribute to the Zn(2+) site. CXXCXGXG motif repeat units lie at residues 158–165 (CPTCDGSG), 175–182 (CDKCHGSG), 201–208 (CDKCGGRG), and 215–222 (CQTCHGQG).

The protein belongs to the DnaJ family. As to quaternary structure, homodimer. The cofactor is Zn(2+).

The protein localises to the cytoplasm. Participates actively in the response to hyperosmotic and heat shock by preventing the aggregation of stress-denatured proteins and by disaggregating proteins, also in an autonomous, DnaK-independent fashion. Unfolded proteins bind initially to DnaJ; upon interaction with the DnaJ-bound protein, DnaK hydrolyzes its bound ATP, resulting in the formation of a stable complex. GrpE releases ADP from DnaK; ATP binding to DnaK triggers the release of the substrate protein, thus completing the reaction cycle. Several rounds of ATP-dependent interactions between DnaJ, DnaK and GrpE are required for fully efficient folding. Also involved, together with DnaK and GrpE, in the DNA replication of plasmids through activation of initiation proteins. This chain is Chaperone protein DnaJ, found in Lactobacillus johnsonii (strain CNCM I-12250 / La1 / NCC 533).